A 227-amino-acid polypeptide reads, in one-letter code: Cytochrome c oxidase subunit 2 (227 aa).

The Mitochondrial intermembrane portion of the chain corresponds to 1 to 14; that stretch reads MAYPFQMGLQDATS. The helical transmembrane segment at 15-45 threads the bilayer; the sequence is PIMEELLHFHDHTLMIVFLISSLVLYIISLM. Topologically, residues 46 to 59 are mitochondrial matrix; that stretch reads LTTKLTHTSTMDAQ. A helical transmembrane segment spans residues 60–87; sequence EVETIWTILPAIILILIALPSLRILYMM. Topologically, residues 88–227 are mitochondrial intermembrane; sequence DEINNPSLTV…HFEKWSASLL (140 aa). Cu cation is bound by residues H161, C196, E198, C200, H204, and M207. Mg(2+) is bound at residue E198.

It belongs to the cytochrome c oxidase subunit 2 family. As to quaternary structure, component of the cytochrome c oxidase (complex IV, CIV), a multisubunit enzyme composed of 14 subunits. The complex is composed of a catalytic core of 3 subunits MT-CO1, MT-CO2 and MT-CO3, encoded in the mitochondrial DNA, and 11 supernumerary subunits COX4I, COX5A, COX5B, COX6A, COX6B, COX6C, COX7A, COX7B, COX7C, COX8 and NDUFA4, which are encoded in the nuclear genome. The complex exists as a monomer or a dimer and forms supercomplexes (SCs) in the inner mitochondrial membrane with NADH-ubiquinone oxidoreductase (complex I, CI) and ubiquinol-cytochrome c oxidoreductase (cytochrome b-c1 complex, complex III, CIII), resulting in different assemblies (supercomplex SCI(1)III(2)IV(1) and megacomplex MCI(2)III(2)IV(2)). Found in a complex with TMEM177, COA6, COX18, COX20, SCO1 and SCO2. Interacts with TMEM177 in a COX20-dependent manner. Interacts with COX20. Interacts with COX16. Cu cation serves as cofactor.

The protein localises to the mitochondrion inner membrane. The enzyme catalyses 4 Fe(II)-[cytochrome c] + O2 + 8 H(+)(in) = 4 Fe(III)-[cytochrome c] + 2 H2O + 4 H(+)(out). Component of the cytochrome c oxidase, the last enzyme in the mitochondrial electron transport chain which drives oxidative phosphorylation. The respiratory chain contains 3 multisubunit complexes succinate dehydrogenase (complex II, CII), ubiquinol-cytochrome c oxidoreductase (cytochrome b-c1 complex, complex III, CIII) and cytochrome c oxidase (complex IV, CIV), that cooperate to transfer electrons derived from NADH and succinate to molecular oxygen, creating an electrochemical gradient over the inner membrane that drives transmembrane transport and the ATP synthase. Cytochrome c oxidase is the component of the respiratory chain that catalyzes the reduction of oxygen to water. Electrons originating from reduced cytochrome c in the intermembrane space (IMS) are transferred via the dinuclear copper A center (CU(A)) of subunit 2 and heme A of subunit 1 to the active site in subunit 1, a binuclear center (BNC) formed by heme A3 and copper B (CU(B)). The BNC reduces molecular oxygen to 2 water molecules using 4 electrons from cytochrome c in the IMS and 4 protons from the mitochondrial matrix. The protein is Cytochrome c oxidase subunit 2 (MT-CO2) of Ailurus fulgens (Himalayan red panda).